The following is a 121-amino-acid chain: Large ribosomal subunit protein uL22 (121 aa).

The protein belongs to the universal ribosomal protein uL22 family. In terms of assembly, part of the 50S ribosomal subunit.

Its function is as follows. This protein binds specifically to 23S rRNA; its binding is stimulated by other ribosomal proteins, e.g. L4, L17, and L20. It is important during the early stages of 50S assembly. It makes multiple contacts with different domains of the 23S rRNA in the assembled 50S subunit and ribosome. Functionally, the globular domain of the protein is located near the polypeptide exit tunnel on the outside of the subunit, while an extended beta-hairpin is found that lines the wall of the exit tunnel in the center of the 70S ribosome. The chain is Large ribosomal subunit protein uL22 from Synechococcus sp. (strain WH7803).